The chain runs to 160 residues: Ribosomal RNA large subunit methyltransferase H (160 aa).

S-adenosyl-L-methionine is bound by residues Leu-76, Gly-108, and 127–132 (LGKMTW).

The protein belongs to the RNA methyltransferase RlmH family. As to quaternary structure, homodimer.

The protein resides in the cytoplasm. It carries out the reaction pseudouridine(1915) in 23S rRNA + S-adenosyl-L-methionine = N(3)-methylpseudouridine(1915) in 23S rRNA + S-adenosyl-L-homocysteine + H(+). In terms of biological role, specifically methylates the pseudouridine at position 1915 (m3Psi1915) in 23S rRNA. In Sinorhizobium fredii (strain NBRC 101917 / NGR234), this protein is Ribosomal RNA large subunit methyltransferase H.